The sequence spans 293 residues: NAD-dependent protein deacetylase (293 aa).

The Deacetylase sirtuin-type domain occupies 5-282 (PAHDHHTLQD…LHAPPHLPRA (278 aa)). NAD(+) contacts are provided by residues 27 to 47 (GAGC…GGWK) and 105 to 108 (QNVD). Residue histidine 123 is the Proton acceptor of the active site. Zn(2+)-binding residues include cysteine 131, cysteine 134, cysteine 182, and cysteine 185. Residues 222-224 (GSS), 248-250 (NFG), and cysteine 266 contribute to the NAD(+) site.

Belongs to the sirtuin family. Class II subfamily. Zn(2+) is required as a cofactor.

The protein localises to the cytoplasm. The enzyme catalyses N(6)-acetyl-L-lysyl-[protein] + NAD(+) + H2O = 2''-O-acetyl-ADP-D-ribose + nicotinamide + L-lysyl-[protein]. In terms of biological role, NAD-dependent protein deacetylase which modulates the activities of several enzymes which are inactive in their acetylated form. In Xanthomonas axonopodis pv. citri (strain 306), this protein is NAD-dependent protein deacetylase.